The chain runs to 197 residues: Probable GTP-binding protein EngB (197 aa).

The region spanning Thr22–Gln197 is the EngB-type G domain. GTP contacts are provided by residues Gly30–Ser37, Gly57–Leu61, Asp75–Gly78, Thr142–Asp145, and Phe177–Ser179. The Mg(2+) site is built by Ser37 and Thr59.

The protein belongs to the TRAFAC class TrmE-Era-EngA-EngB-Septin-like GTPase superfamily. EngB GTPase family. It depends on Mg(2+) as a cofactor.

In terms of biological role, necessary for normal cell division and for the maintenance of normal septation. This is Probable GTP-binding protein EngB from Francisella tularensis subsp. holarctica (strain FTNF002-00 / FTA).